A 178-amino-acid polypeptide reads, in one-letter code: Killin (178 aa).

The DNA-binding element occupies serine 8 to tryptophan 50.

Its subcellular location is the nucleus. DNA-binding protein involved in S phase checkpoint control-coupled apoptosis by mediating p53/TP53-induced apoptosis. Has the ability to inhibit DNA synthesis and S phase arrest coupled to apoptosis. Has affinity to both double- and single-stranded DNA. The protein is Killin (KLLN) of Homo sapiens (Human).